A 469-amino-acid chain; its full sequence is 3-isopropylmalate dehydratase large subunit (469 aa).

Cys347, Cys408, and Cys411 together coordinate [4Fe-4S] cluster.

The protein belongs to the aconitase/IPM isomerase family. LeuC type 1 subfamily. In terms of assembly, heterodimer of LeuC and LeuD. The cofactor is [4Fe-4S] cluster.

It carries out the reaction (2R,3S)-3-isopropylmalate = (2S)-2-isopropylmalate. Its pathway is amino-acid biosynthesis; L-leucine biosynthesis; L-leucine from 3-methyl-2-oxobutanoate: step 2/4. In terms of biological role, catalyzes the isomerization between 2-isopropylmalate and 3-isopropylmalate, via the formation of 2-isopropylmaleate. The chain is 3-isopropylmalate dehydratase large subunit from Haemophilus influenzae (strain 86-028NP).